The sequence spans 1183 residues: Chromosome partition protein Smc (1183 aa).

Residue 32–39 (PNGCGKTN) coordinates ATP. Coiled-coil stretches lie at residues 167–322 (ITRY…ERLN) and 358–497 (AEFE…ALCN). A disordered region spans residues 409 to 442 (KEHLEGSVNRLDQRKRDLERSMEQAEPERRRTSE). Over residues 419 to 442 (LDQRKRDLERSMEQAEPERRRTSE) the composition is skewed to basic and acidic residues. The SMC hinge domain maps to 523–632 (LGCLSDLISV…VADLDAAEQL (110 aa)). Coiled-coil stretches lie at residues 669–941 (GKKA…VMER) and 980–1025 (NELA…ALEK).

This sequence belongs to the SMC family. As to quaternary structure, homodimer.

The protein localises to the cytoplasm. In terms of biological role, required for chromosome condensation and partitioning. The sequence is that of Chromosome partition protein Smc from Chlorobaculum tepidum (strain ATCC 49652 / DSM 12025 / NBRC 103806 / TLS) (Chlorobium tepidum).